A 452-amino-acid polypeptide reads, in one-letter code: Matrilin-3 (452 aa).

The first 24 residues, 1-24 (MRRALGTLGCCLALLLPLLPAARG), serve as a signal peptide directing secretion. A VWFA domain is found at 54 to 229 (DLVFIIDSSR…GVIEKLTSKF (176 aa)). EGF-like domains are found at residues 235 to 275 (AANT…RTCS), 276 to 316 (AVDV…KTCS), 317 to 357 (AMDV…KTCS), and 358 to 398 (AVDV…KTCS). 12 cysteine pairs are disulfide-bonded: cysteine 239–cysteine 250, cysteine 246–cysteine 259, cysteine 261–cysteine 274, cysteine 280–cysteine 291, cysteine 287–cysteine 300, cysteine 302–cysteine 315, cysteine 321–cysteine 332, cysteine 328–cysteine 341, cysteine 343–cysteine 356, cysteine 362–cysteine 373, cysteine 369–cysteine 382, and cysteine 384–cysteine 397. An N-linked (GlcNAc...) asparagine glycan is attached at asparagine 295. A coiled-coil region spans residues 419–451 (ALQDSVTSRLEALSTKLDEVSQKLQAYQDRQQV).

In terms of assembly, can form homooligomers (monomers, dimers, trimers and tetramers) and heterooligomers with matrilin-1. In terms of tissue distribution, expression is restricted to cartilaginous tissues.

The protein resides in the secreted. Functionally, major component of the extracellular matrix of cartilage and may play a role in the formation of extracellular filamentous networks. This is Matrilin-3 (MATN3) from Gallus gallus (Chicken).